The primary structure comprises 1273 residues: Chitin synthase 7 (1273 aa).

The interval Met1–Gly69 is disordered. Over Met1 to Arg79 the chain is Cytoplasmic. A helical transmembrane segment spans residues Phe80–Ser100. At Ser101–Lys117 the chain is on the extracellular side. A helical membrane pass occupies residues Val118–Leu138. The Cytoplasmic portion of the chain corresponds to Asn139–Ser360. Residues Leu361 to Phe381 traverse the membrane as a helical segment. Residues Met382–Gln820 lie on the Extracellular side of the membrane. A glycan (N-linked (GlcNAc...) asparagine) is linked at Asn412. A disordered region spans residues Ala416 to Val451. N-linked (GlcNAc...) asparagine glycosylation is found at Asn667 and Asn796. Residues Phe821–Tyr841 form a helical membrane-spanning segment. The Cytoplasmic portion of the chain corresponds to Thr842–Glu857. The helical transmembrane segment at Ala858–Ala878 threads the bilayer. The Extracellular portion of the chain corresponds to Thr879–Lys881. A helical membrane pass occupies residues Val882–Leu902. At Pro903–Ser1273 the chain is on the cytoplasmic side. Disordered regions lie at residues Arg966–Val1009 and Asn1126–Ser1273. Over residues Ser1000–Val1009 the composition is skewed to low complexity. Over residues Gln1215 to Pro1232 the composition is skewed to pro residues. Low complexity predominate over residues Thr1233–Ala1246.

Belongs to the chitin synthase family. Class IV subfamily.

The protein localises to the cell membrane. It is found in the cytoplasmic vesicle membrane. The enzyme catalyses [(1-&gt;4)-N-acetyl-beta-D-glucosaminyl](n) + UDP-N-acetyl-alpha-D-glucosamine = [(1-&gt;4)-N-acetyl-beta-D-glucosaminyl](n+1) + UDP + H(+). Functionally, polymerizes chitin, a structural polymer of the cell wall and septum, by transferring the sugar moiety of UDP-GlcNAc to the non-reducing end of the growing chitin polymer. The chain is Chitin synthase 7 from Mycosarcoma maydis (Corn smut fungus).